The chain runs to 119 residues: Acidic phospholipase A2 CM-II (119 aa).

3 residues coordinate Ca(2+): Tyr-25, Gly-27, and Gly-29. The active site involves His-45. Residue Asp-46 participates in Ca(2+) binding. Asp-87 is an active-site residue.

The protein belongs to the phospholipase A2 family. Group II subfamily. D49 sub-subfamily. Ca(2+) is required as a cofactor. Contains 6 disulfide bonds. Expressed by the venom gland.

The protein localises to the secreted. It catalyses the reaction a 1,2-diacyl-sn-glycero-3-phosphocholine + H2O = a 1-acyl-sn-glycero-3-phosphocholine + a fatty acid + H(+). Functionally, PLA2 catalyzes the calcium-dependent hydrolysis of the 2-acyl groups in 3-sn-phosphoglycerides. This chain is Acidic phospholipase A2 CM-II, found in Bitis nasicornis (Rhinoceros adder).